A 521-amino-acid polypeptide reads, in one-letter code: MDNDSQYSGYSYKSGHSRSSRKHRDRRERHRSKSREGSRGDKSVTIQAPGEPLLDNESTRGEDRDDNWGETTTVVTGTSEHSISHDDITRITKDMEDSAKLDCSRHLGVVIGGALALLSFLTPIAFMLLPQILWREDLEQCGTACEGLFISVAFKLLILLLGSWALFFRRPKAFFPRVFVFRALLMVLVFLLVVSYWLFYGVRILESRDKNYQGIVQYAVSLVDALLFVHYLAVVLLELRQLQPQFTIKVVRSTDGASRFYNIGHLSIQRVAVWILENYYHDFPVYNPALLNLPKSILSKKMSGFKVYSLGEENTTNNSTGQSRAVIAAAARRRDNSHNEYYYEEAEHERRVRKRKARLVVAVEEAFTHIKRLQDEDQKNPREIMDPREAAQAIFASMARAMQKYLRTTKQQPYHTMESILHHLEFCITHDMTPKAFLERYLGPGPTIQYHKDRWLAKQWTLVSEEPVTNGLKDGVVFVLKRQDFSLVVSTKKIPFFKLSEEFVDPKSHKFVMRLQSETSV.

The segment at 1-81 (MDNDSQYSGY…TTVVTGTSEH (81 aa)) is disordered. Residues 1-108 (MDNDSQYSGY…AKLDCSRHLG (108 aa)) are Cytoplasmic-facing. Residues 15-33 (GHSRSSRKHRDRRERHRSK) are compositionally biased toward basic residues. The span at 57 to 67 (ESTRGEDRDDN) shows a compositional bias: basic and acidic residues. Positions 69–81 (GETTTVVTGTSEH) are enriched in low complexity. A helical membrane pass occupies residues 109–129 (VVIGGALALLSFLTPIAFMLL). The Extracellular portion of the chain corresponds to 130 to 147 (PQILWREDLEQCGTACEG). The helical transmembrane segment at 148-168 (LFISVAFKLLILLLGSWALFF) threads the bilayer. Over 169-178 (RRPKAFFPRV) the chain is Cytoplasmic. A helical transmembrane segment spans residues 179 to 199 (FVFRALLMVLVFLLVVSYWLF). Residues 200–218 (YGVRILESRDKNYQGIVQY) lie on the Extracellular side of the membrane. A helical transmembrane segment spans residues 219–239 (AVSLVDALLFVHYLAVVLLEL). Residues 240 to 521 (RQLQPQFTIK…VMRLQSETSV (282 aa)) lie on the Cytoplasmic side of the membrane. Positions 518–521 (ETSV) match the PDZ-binding motif.

It belongs to the Vang family. Interacts with dvl/dsh. Interacts with prickle3. During gastrulation, broadly expressed throughout the marginal zone and animal cap region. From the neurula stages, expression becomes concentrated in neural tissues, in the neural plate and neural tube.

It is found in the cell membrane. Its function is as follows. Has a role in non-canonical Wnt/planar cell polarity (PCP) signaling; can recruit dvl/dsh and prickle from the cytoplasm to the plasma membrane. Acts in a PCP complex to regulate the polarized assembly of fibronectrin on the surface of the mesoderm during gastrulation. Regulates convergent extension cell movements in both dorsal mesoderm and neural tissue during gastrulation, without affecting cell fate. Regulates neural fold closure during neurulation. May be required for cell surface localization of fzd3 and fzd6 in the inner ear. This Xenopus laevis (African clawed frog) protein is Vang-like protein 2-A (vangl2-a).